A 653-amino-acid polypeptide reads, in one-letter code: E3 ubiquitin-protein ligase TRIM32 (653 aa).

At Ala2 the chain carries N-acetylalanine. The RING-type zinc-finger motif lies at 20-65; that stretch reads CPICMESFTEEQLRPKLLHCGHTICRQCLEKLLASSINGVRCPFCS. Phosphoserine; by CHEK2 is present on Ser55. Zn(2+) contacts are provided by Cys100, Cys103, Cys123, and His128. The B box-type zinc finger occupies 103-133; it reads CGRRLPRQFCRSCGLVLCEPCREADHQPPGH. Residues 138-197 are a coiled coil; it reads VKEAAEERRRDFGEKLTRLRELMGELQRRKAALEGVSKDLQARYKAVLQEYGHEERRVQD. 3 positions are modified to phosphoserine: Ser328, Ser335, and Ser339. NHL repeat units lie at residues 358-401, 415-458, 459-499, 562-605, and 606-646; these read LKKM…FTRK, DSFV…YTLD, GHCV…FTVD, GRQI…FPKG, and GGYS…YSYH.

It belongs to the TRIM/RBCC family. As to quaternary structure, it self-associates. Interacts with DTNBP1. Interacts with PIAS4/PIASY upon treatment with UVB and TNF-alpha. Interacts with AMBRA1; promoting activation of ULK1 through unanchored 'Lys-63'-linked polyubiquitin chains. Interacts with TICAM1 and TAX1BP1; these interactions target TICAM1 to TAX1BP1-mediated selective autophagic degradation. In terms of assembly, (Microbial infection) Interacts with S.typhimurium protein SseK3; SseK3 does not glycosylate TRIM32. In terms of processing, ubiquitinated. Phosphorylation at Ser-55 by CHEK2 under oxidative stress, activates the E3 ligase activity and promotes ATG7 ubiquitination leading to positive regulation of the autophagosme assembly. Spleen, thymus, prostate, testis, ovary, intestine, colon and skeletal muscle.

Its subcellular location is the cytoplasm. The protein resides in the mitochondrion. It localises to the endoplasmic reticulum. The enzyme catalyses S-ubiquitinyl-[E2 ubiquitin-conjugating enzyme]-L-cysteine + [acceptor protein]-L-lysine = [E2 ubiquitin-conjugating enzyme]-L-cysteine + N(6)-ubiquitinyl-[acceptor protein]-L-lysine.. It functions in the pathway protein modification; protein ubiquitination. In terms of biological role, E3 ubiquitin ligase that plays a role in various biological processes including neural stem cell differentiation, innate immunity, inflammatory resonse and autophagy. Plays a role in virus-triggered induction of IFN-beta and TNF-alpha by mediating the ubiquitination of STING1. Mechanistically, targets STING1 for 'Lys-63'-linked ubiquitination which promotes the interaction of STING1 with TBK1. Regulates bacterial clearance and promotes autophagy in Mycobacterium tuberculosis-infected macrophages. Negatively regulates TLR3/4-mediated innate immune and inflammatory response by triggering the autophagic degradation of TICAM1 in an E3 activity-independent manner. Plays an essential role in oxidative stress induced cell death by inducing loss of transmembrane potential and enhancing mitochondrial reactive oxygen species (ROS) production during oxidative stress conditions. Ubiquitinates XIAP and targets it for proteasomal degradation. Ubiquitinates DTNBP1 (dysbindin) and promotes its degradation. May ubiquitinate BBS2. Ubiquitinates PIAS4/PIASY and promotes its degradation in keratinocytes treated with UVB and TNF-alpha. Also acts as a regulator of autophagy by mediating formation of unanchored 'Lys-63'-linked polyubiquitin chains that activate ULK1: interaction with AMBRA1 is required for ULK1 activation. Positively regulates dendritic branching by promoting ubiquitination and subsequent degradation of the epigenetic factor CDYL. Under metabolic stress and phosphorylation by CHK2, mediates 'Lys-63'-linked ubiquitination of ATG7 at 'Lys-45' to initiate autophagy. Its function is as follows. (Microbial infection) May play a significant role in mediating the biological activity of the HIV-1 Tat protein in vivo. Binds specifically to the activation domain of HIV-1 Tat and can also interact with the HIV-2 and EIAV Tat proteins in vivo. This chain is E3 ubiquitin-protein ligase TRIM32, found in Homo sapiens (Human).